The primary structure comprises 334 residues: MIEADRLIAPENPAFRDEDVIDRAIRPKKLADYQGQDHVRDQMEIFIKAAQLRSEALDHLLIFGPPGLGKTTLANIVANEMEVNIRTTSGPVLEKAGDLAALLTNLEENDVLFIDEIHRLSPMVEEVLYPAMEDYQLDIMIGEGPAARSIKIDLPPFTLIGATTRAGSLTSPLRDRFGITQRLEYYKVQDLQNIVQRSADCLGLSMEPEGALEVARRARGTPRIANRLLRRVRDYAEVKGNGHICADVADKALNMLDVDAQGFDYMDRKLLLAIMEKFGGGPVGLDNMAAAIGEEKDTIEDVLEPYLIQQGYLQRTPRGRIATDRAYLHFGIEK.

The large ATPase domain (RuvB-L) stretch occupies residues 4–186 (ADRLIAPENP…FGITQRLEYY (183 aa)). ATP is bound by residues Ile-25, Arg-26, Gly-67, Lys-70, Thr-71, Thr-72, 133 to 135 (EDY), Arg-176, Tyr-186, and Arg-223. Thr-71 contacts Mg(2+). The tract at residues 187–257 (KVQDLQNIVQ…VADKALNMLD (71 aa)) is small ATPAse domain (RuvB-S). The head domain (RuvB-H) stretch occupies residues 260–334 (AQGFDYMDRK…RAYLHFGIEK (75 aa)). Residues Arg-315 and Arg-320 each coordinate DNA.

It belongs to the RuvB family. Homohexamer. Forms an RuvA(8)-RuvB(12)-Holliday junction (HJ) complex. HJ DNA is sandwiched between 2 RuvA tetramers; dsDNA enters through RuvA and exits via RuvB. An RuvB hexamer assembles on each DNA strand where it exits the tetramer. Each RuvB hexamer is contacted by two RuvA subunits (via domain III) on 2 adjacent RuvB subunits; this complex drives branch migration. In the full resolvosome a probable DNA-RuvA(4)-RuvB(12)-RuvC(2) complex forms which resolves the HJ.

It localises to the cytoplasm. The catalysed reaction is ATP + H2O = ADP + phosphate + H(+). The RuvA-RuvB-RuvC complex processes Holliday junction (HJ) DNA during genetic recombination and DNA repair, while the RuvA-RuvB complex plays an important role in the rescue of blocked DNA replication forks via replication fork reversal (RFR). RuvA specifically binds to HJ cruciform DNA, conferring on it an open structure. The RuvB hexamer acts as an ATP-dependent pump, pulling dsDNA into and through the RuvAB complex. RuvB forms 2 homohexamers on either side of HJ DNA bound by 1 or 2 RuvA tetramers; 4 subunits per hexamer contact DNA at a time. Coordinated motions by a converter formed by DNA-disengaged RuvB subunits stimulates ATP hydrolysis and nucleotide exchange. Immobilization of the converter enables RuvB to convert the ATP-contained energy into a lever motion, pulling 2 nucleotides of DNA out of the RuvA tetramer per ATP hydrolyzed, thus driving DNA branch migration. The RuvB motors rotate together with the DNA substrate, which together with the progressing nucleotide cycle form the mechanistic basis for DNA recombination by continuous HJ branch migration. Branch migration allows RuvC to scan DNA until it finds its consensus sequence, where it cleaves and resolves cruciform DNA. This Vibrio parahaemolyticus serotype O3:K6 (strain RIMD 2210633) protein is Holliday junction branch migration complex subunit RuvB.